Consider the following 59-residue polypeptide: UPF0509 protein YciZ (59 aa).

Belongs to the UPF0509 family.

The chain is UPF0509 protein YciZ from Salmonella agona (strain SL483).